The sequence spans 264 residues: Thymidylate synthase (264 aa).

Arg-21 is a binding site for dUMP. His-51 serves as a coordination point for (6R)-5,10-methylene-5,6,7,8-tetrahydrofolate. Arg-126 to Arg-127 contributes to the dUMP binding site. The active-site Nucleophile is the Cys-146. DUMP is bound by residues Arg-166 to Asp-169, Asn-177, and His-207 to Tyr-209. Residue Asp-169 coordinates (6R)-5,10-methylene-5,6,7,8-tetrahydrofolate. Ala-263 contributes to the (6R)-5,10-methylene-5,6,7,8-tetrahydrofolate binding site.

It belongs to the thymidylate synthase family. Bacterial-type ThyA subfamily. In terms of assembly, homodimer.

The protein localises to the cytoplasm. The enzyme catalyses dUMP + (6R)-5,10-methylene-5,6,7,8-tetrahydrofolate = 7,8-dihydrofolate + dTMP. The protein operates within pyrimidine metabolism; dTTP biosynthesis. Catalyzes the reductive methylation of 2'-deoxyuridine-5'-monophosphate (dUMP) to 2'-deoxythymidine-5'-monophosphate (dTMP) while utilizing 5,10-methylenetetrahydrofolate (mTHF) as the methyl donor and reductant in the reaction, yielding dihydrofolate (DHF) as a by-product. This enzymatic reaction provides an intracellular de novo source of dTMP, an essential precursor for DNA biosynthesis. The polypeptide is Thymidylate synthase (Bacteroides fragilis (strain ATCC 25285 / DSM 2151 / CCUG 4856 / JCM 11019 / LMG 10263 / NCTC 9343 / Onslow / VPI 2553 / EN-2)).